Here is a 142-residue protein sequence, read N- to C-terminus: Large ribosomal subunit protein uL13 (142 aa).

Belongs to the universal ribosomal protein uL13 family. As to quaternary structure, part of the 50S ribosomal subunit.

Its function is as follows. This protein is one of the early assembly proteins of the 50S ribosomal subunit, although it is not seen to bind rRNA by itself. It is important during the early stages of 50S assembly. The sequence is that of Large ribosomal subunit protein uL13 from Syntrophotalea carbinolica (strain DSM 2380 / NBRC 103641 / GraBd1) (Pelobacter carbinolicus).